The following is a 74-amino-acid chain: RNA-binding protein Hfq (74 aa).

A Sm domain is found at 9–69 (DQFLNQLRKD…ISTFAPEKNV (61 aa)).

The protein belongs to the Hfq family. As to quaternary structure, homohexamer.

Its function is as follows. RNA chaperone that binds small regulatory RNA (sRNAs) and mRNAs to facilitate mRNA translational regulation in response to envelope stress, environmental stress and changes in metabolite concentrations. Also binds with high specificity to tRNAs. This chain is RNA-binding protein Hfq, found in Geobacillus sp. (strain WCH70).